The chain runs to 88 residues: U-scoloptoxin(XY)-Er1a (88 aa).

The signal sequence occupies residues 1–24 (MASQVVLSFALVVVLAVFVGQVDS). Positions 66-88 (RPELSPGAWDDSSEEKDNEASLA) are disordered. The propeptide occupies 79 to 88 (EEKDNEASLA).

The protein belongs to the scoloptoxin-XY family. Contains 3 disulfide bonds. In terms of tissue distribution, expressed by the venom gland.

The protein localises to the secreted. The protein is U-scoloptoxin(XY)-Er1a of Ethmostigmus rubripes (Giant centipede).